The chain runs to 304 residues: Ribosomal protein L11 methyltransferase (304 aa).

Residues Thr-147, Gly-168, Asp-190, and Asn-238 each contribute to the S-adenosyl-L-methionine site.

This sequence belongs to the methyltransferase superfamily. PrmA family.

Its subcellular location is the cytoplasm. The catalysed reaction is L-lysyl-[protein] + 3 S-adenosyl-L-methionine = N(6),N(6),N(6)-trimethyl-L-lysyl-[protein] + 3 S-adenosyl-L-homocysteine + 3 H(+). Functionally, methylates ribosomal protein L11. This is Ribosomal protein L11 methyltransferase from Prochlorococcus marinus (strain SARG / CCMP1375 / SS120).